The sequence spans 610 residues: UvrABC system protein C (610 aa).

Residues 16-94 enclose the GIY-YIG domain; sequence SQPGVYRMYD…IKLYQPRYNV (79 aa). The 36-residue stretch at 204–239 folds into the UVR domain; it reads DQVLTQLISRMETASQNLEFEEAARIRDQIQAVRRV.

This sequence belongs to the UvrC family. As to quaternary structure, interacts with UvrB in an incision complex.

It localises to the cytoplasm. Functionally, the UvrABC repair system catalyzes the recognition and processing of DNA lesions. UvrC both incises the 5' and 3' sides of the lesion. The N-terminal half is responsible for the 3' incision and the C-terminal half is responsible for the 5' incision. The polypeptide is UvrABC system protein C (Escherichia coli O45:K1 (strain S88 / ExPEC)).